Reading from the N-terminus, the 400-residue chain is Na(+)/H(+) antiporter NhaA (400 aa).

The next 11 membrane-spanning stretches (helical) occupy residues 10-30 (FNLEASGGIVLALAAIAAMII), 60-80 (AHHWINDGLMAVFFFLVGLEL), 95-115 (IILPAGAALGGMVMPAIVYLF), 126-146 (GWAIPTATDIAFALGILSLLG), 155-175 (VFLVSIAIFDDIGAIIIIALF), 178-198 (NDLSLGSLAIAGLCLPFLYML), 218-238 (IAVLKSGIHATLAGVVLALFI), 265-285 (GILPLFAFANAGISLKGAGFG), 295-315 (IAAGLFIGKQVGVMLMCWLIF), 334-354 (AALLCGVGFTMSLFIGGLAFA), and 364-384 (LGIIMGSIVSGIAGYMMLKTT).

The protein belongs to the NhaA Na(+)/H(+) (TC 2.A.33) antiporter family.

Its subcellular location is the cell inner membrane. The enzyme catalyses Na(+)(in) + 2 H(+)(out) = Na(+)(out) + 2 H(+)(in). Its function is as follows. Na(+)/H(+) antiporter that extrudes sodium in exchange for external protons. The protein is Na(+)/H(+) antiporter NhaA of Psychrobacter arcticus (strain DSM 17307 / VKM B-2377 / 273-4).